The chain runs to 282 residues: Hepatitis A virus cellular receptor 2 homolog (282 aa).

Residues 1 to 21 (MFSWLPFSCALLLLQPLPARS) form the signal peptide. An Ig-like V-type domain is found at 22–131 (LENAYTAEVG…EKLELKLSIT (110 aa)). The Extracellular segment spans residues 22 to 194 (LENAYTAEVG…KDSGETIRTA (173 aa)). 3 disulfide bridges follow: cysteine 38–cysteine 111, cysteine 52–cysteine 63, and cysteine 58–cysteine 110. Glutamine 62 is a binding site for a 1,2-diacyl-sn-glycero-3-phospho-L-serine. 2 N-linked (GlcNAc...) asparagine glycosylation sites follow: asparagine 74 and asparagine 100. Arginine 112 serves as a coordination point for a 1,2-diacyl-sn-glycero-3-phospho-L-serine. Residues phenylalanine 115 and glycine 117 each coordinate Ca(2+). Position 119 (methionine 119) interacts with a 1,2-diacyl-sn-glycero-3-phospho-L-serine. A Ca(2+)-binding site is contributed by asparagine 120. Residues 138–163 (PAGTAHGDSTTASPRTLTTEGSGSET) are disordered. Positions 144-163 (GDSTTASPRTLTTEGSGSET) are enriched in polar residues. Threonine 147 carries an O-linked (GalNAc...) threonine glycan. An N-linked (GlcNAc...) asparagine glycan is attached at asparagine 173. The chain crosses the membrane as a helical span at residues 195 to 215 (VHIGVGVSAGLALALILGVLI). The Cytoplasmic segment spans residues 216–282 (LKWYSSKKKK…YCYVSSQQPS (67 aa)). The interaction with BAG6 stretch occupies residues 253–271 (EENIYTIEENIYEMENSNE). At tyrosine 257 the chain carries Phosphotyrosine; by ITK.

It belongs to the immunoglobulin superfamily. TIM family. As to quaternary structure, interacts with HMGB1; impairs HMGB1 binding to B-DNA and likely HMGB1-mediated innate immune response. Interacts with BAG6. Interacts (phosphorylated) with PIK3R1 and PIK3R2. Interacts (not dependent on its phosphorylation status) with FYN. Interacts (in basal state T-cells) with VAV1; AKT1/2, LCP2, ZAP70, SYK, PIK3R1, FYN, SH3BP2 and SH2D2A. Interacts (in activated T-cells) with LCK and PLCG. Interacts with ILF3; this interaction promotes ILF3 ubiquitination and degradation.

The protein resides in the membrane. It localises to the cell junction. In terms of biological role, cell surface receptor implicated in modulating innate and adaptive immune responses. Generally accepted to have an inhibiting function. Reports on stimulating functions suggest that the activity may be influenced by the cellular context and/or the respective ligand. Regulates macrophage activation. Inhibits T-helper type 1 lymphocyte (Th1)-mediated auto- and alloimmune responses and promotes immunological tolerance. In CD8+ cells attenuates TCR-induced signaling, specifically by blocking NF-kappaB and NFAT promoter activities resulting in the loss of IL-2 secretion. The function may implicate its association with LCK proposed to impair phosphorylation of TCR subunits. In contrast, shown to activate TCR-induced signaling in T-cells probably implicating ZAP70, LCP2, LCK and FYN. Expressed on Treg cells can inhibit Th17 cell responses. Receptor for LGALS9. Binding to LGALS9 is believed to result in suppression of T-cell responses; the resulting apoptosis of antigen-specific cells may implicate HAVCR2 phosphorylation and disruption of its association with BAG6. Binding to LGALS9 is proposed to be involved in innate immune response to intracellular pathogens. Expressed on Th1 cells interacts with LGALS9 expressed on Mycobacterium tuberculosis-infected macrophages to stimulate antibactericidal activity including IL-1 beta secretion and to restrict intracellular bacterial growth. However, the function as receptor for LGALS9 has been challenged. Also reported to enhance CD8+ T cell responses to an acute infection such as by Listeria monocytogenes. Receptor for phosphatidylserine (PtSer); PtSer-binding is calcium-dependent. May recognize PtSer on apoptotic cells leading to their phagocytosis. Mediates the engulfment of apoptotic cells by dendritic cells. Expressed on T-cells, promotes conjugation but not engulfment of apoptotic cells. Expressed on dendritic cells (DCs) positively regulates innate immune response and in synergy with Toll-like receptors promotes secretion of TNF-alpha. In tumor-imfiltrating DCs suppresses nucleic acid-mediated innate immune repsonse by interaction with HMGB1 and interfering with nucleic acid-sensing and trafficking of nucleid acids to endosomes. Can enhance mast cell production of Th2 cytokines Il-4, IL-6 and IL-13. Expressed on natural killer (NK) cells acts as a coreceptor to enhance IFN-gamma production in response to LGALS9. In contrast, shown to suppress NK cell-mediated cytotoxicity. Negatively regulates NK cell function in LPS-induced endotoxic shock. In Rattus norvegicus (Rat), this protein is Hepatitis A virus cellular receptor 2 homolog (Havcr2).